The primary structure comprises 274 residues: Oxidoreductase BOA17 (274 aa).

5 residues coordinate NADP(+): Leu-14, Thr-32, Asp-57, Asn-84, and Lys-117. Residues Ser-135 and Tyr-149 each act as proton donor in the active site. NADP(+) is bound by residues Tyr-149, Lys-153, Ile-182, and Thr-184. Residue Lys-153 is the Lowers pKa of active site Tyr of the active site.

Belongs to the short-chain dehydrogenases/reductases (SDR) family.

The protein operates within polyketide biosynthesis. Oxidoreductase; part of the gene cluster B that mediates the biosynthesis of botcinic acid and its botcinin derivatives, acetate-derived polyketides that contribute to virulence when combined with the sesquiterpene botrydial. Botcinic acid and its derivatives have been shown to induce chlorosis and necrosis during host plant infection, but also have antifungal activities. Two polyketide synthases, BOA6 and BOA9, are involved in the biosynthesis of botcinins. BOA6 mediates the formation of the per-methylated tetraketide core by condensation of four units of malonyl-CoA with one unit of acetyl-CoA, which would be methylated in activated methylene groups to yield a bicyclic acid intermediate that could then either be converted to botrylactone derivatives or lose the starter acetate unit through a retro-Claisen type C-C bond cleavage to yield botcinin derivatives. The second polyketide synthase, BOA9, is probably required for the biosynthesis of the tetraketide side chain of botcinins. The methyltransferase (MT) domain within BOA6 is probably responsible for the incorporation of four methyl groups. The trans-enoyl reductase BOA5 might take over the enoyl reductase function of BOA6 that misses an ER domain. The monooxygenases BOA2, BOA3 and BOA4 might be involved in further hydroxylations at C4, C5 and C8, whereas BOA7, close to BOA9, could potentially be involved in the hydroxylation at C4 in the side chain of botcinins. The sequence is that of Oxidoreductase BOA17 from Botryotinia fuckeliana (strain B05.10) (Noble rot fungus).